A 483-amino-acid chain; its full sequence is Phosphoenolpyruvate carboxylase (483 aa).

The disordered stretch occupies residues 1 to 20 (MKVPRCMSTQHPDNVNPPFF).

This sequence belongs to the PEPCase type 2 family. In terms of assembly, homotetramer. The cofactor is Mg(2+).

It catalyses the reaction oxaloacetate + phosphate = phosphoenolpyruvate + hydrogencarbonate. Its activity is regulated as follows. Inhibited by NaCl, KCl, ATP, ADP, GTP and aspartate. Unlike E.coli, not regulated by acetyl-CoA. Catalyzes the irreversible beta-carboxylation of phosphoenolpyruvate (PEP) to form oxaloacetate (OAA), a four-carbon dicarboxylic acid source for the tricarboxylic acid cycle. The chain is Phosphoenolpyruvate carboxylase (ppcA) from Methanothermobacter thermautotrophicus (strain ATCC 29096 / DSM 1053 / JCM 10044 / NBRC 100330 / Delta H) (Methanobacterium thermoautotrophicum).